The following is a 798-amino-acid chain: Phenylalanine--tRNA ligase beta subunit (798 aa).

Positions 39–148 (NPIFDGFLVG…EDIPIGKKIN (110 aa)) constitute a tRNA-binding domain. The 76-residue stretch at 402–477 (SCSNKIKLYH…RIYNYNNIPL (76 aa)) folds into the B5 domain. Residues D455, D461, and D465 each coordinate Mg(2+). An FDX-ACB domain is found at 704–797 (SKYPTSRRDI…LKKKFQVVLR (94 aa)).

It belongs to the phenylalanyl-tRNA synthetase beta subunit family. Type 1 subfamily. In terms of assembly, tetramer of two alpha and two beta subunits. Mg(2+) serves as cofactor.

The protein resides in the cytoplasm. It catalyses the reaction tRNA(Phe) + L-phenylalanine + ATP = L-phenylalanyl-tRNA(Phe) + AMP + diphosphate + H(+). This is Phenylalanine--tRNA ligase beta subunit (pheT) from Buchnera aphidicola subsp. Schizaphis graminum (strain Sg).